We begin with the raw amino-acid sequence, 189 residues long: MALPHAILVSLCEQASSGYELARRFDRSIGYFWTATHQQIYRTLRVMENNNWVRATTVLQHGRPDKKVYAISDSGRAELARWIAEPLSPTRPGRGSALTDSSTRDIAVKLRGAGYGDVAALYTQVTALRAERVKSLDTYRGIEKRTFADPSALDGAALHQYLVLRGGIRAEESAIDWLDEVAEALQEKR.

It belongs to the PadR family. Homodimer.

The protein localises to the cytoplasm. Its function is as follows. Probable transcriptional regulator that may help mitigate the effect of oxidative stress and help mycobacteria survive inside macrophages. Binds to its own promoter region. This chain is Probable transcriptional regulator Rv1176c, found in Mycobacterium tuberculosis (strain ATCC 25618 / H37Rv).